A 148-amino-acid polypeptide reads, in one-letter code: Large ribosomal subunit protein bL9 (148 aa).

The protein belongs to the bacterial ribosomal protein bL9 family.

In terms of biological role, binds to the 23S rRNA. The sequence is that of Large ribosomal subunit protein bL9 from Clostridium beijerinckii (strain ATCC 51743 / NCIMB 8052) (Clostridium acetobutylicum).